The chain runs to 284 residues: uncharacterized protein (284 aa).

The signal sequence occupies residues 1 to 20 (MLHNIQSILQFLLFVSSVQA). The Apple domain maps to 38-121 (CFEFKKNYWI…FTVNFFRNIC (84 aa)). Disulfide bonds link Cys38–Cys121, Cys63–Cys89, and Cys67–Cys77. Residue Asn256 is glycosylated (N-linked (GlcNAc...) asparagine). Residues 264-284 (SSTGLKFTTGLLIILVVFLFL) form a helical membrane-spanning segment.

It localises to the membrane. This is an uncharacterized protein from Caenorhabditis elegans.